The following is a 375-amino-acid chain: tRNA-specific 2-thiouridylase MnmA (375 aa).

Residues glycine 8–serine 15 and methionine 34 each bind ATP. Positions asparagine 104–aspartate 106 are interaction with target base in tRNA. Cysteine 109 functions as the Nucleophile in the catalytic mechanism. A disulfide bridge connects residues cysteine 109 and cysteine 208. Glycine 134 lines the ATP pocket. The tract at residues lysine 158 to glutamine 160 is interaction with tRNA. Cysteine 208 (cysteine persulfide intermediate) is an active-site residue. Positions arginine 321–tyrosine 322 are interaction with tRNA.

It belongs to the MnmA/TRMU family.

It is found in the cytoplasm. It catalyses the reaction S-sulfanyl-L-cysteinyl-[protein] + uridine(34) in tRNA + AH2 + ATP = 2-thiouridine(34) in tRNA + L-cysteinyl-[protein] + A + AMP + diphosphate + H(+). Functionally, catalyzes the 2-thiolation of uridine at the wobble position (U34) of tRNA, leading to the formation of s(2)U34. The polypeptide is tRNA-specific 2-thiouridylase MnmA (Mycoplasma capricolum subsp. capricolum (strain California kid / ATCC 27343 / NCTC 10154)).